We begin with the raw amino-acid sequence, 222 residues long: Charged multivesicular body protein 4b (222 aa).

Disordered stretches follow at residues 1–21 and 183–222; these read MSLI…PSPQ and GPET…WATA. The stretch at 21–182 forms a coiled coil; that stretch reads QEAIQKLRDT…ELDKNLLEVQ (162 aa). Positions 188-200 are enriched in low complexity; that stretch reads PLPNVPAAVLPAK.

Belongs to the SNF7 family. As to quaternary structure, probable core component of the endosomal sorting required for transport complex III (ESCRT-III). ESCRT-III components are thought to multimerize to form a flat lattice on the perimeter membrane of the endosome.

The protein localises to the cytoplasm. It localises to the cytosol. It is found in the late endosome membrane. Its subcellular location is the midbody. Its function is as follows. Probable core component of the endosomal sorting required for transport complex III (ESCRT-III) which is involved in multivesicular bodies (MVBs) formation and sorting of endosomal cargo proteins into MVBs. MVBs contain intraluminal vesicles (ILVs) that are generated by invagination and scission from the limiting membrane of the endosome and mostly are delivered to lysosomes enabling degradation of membrane proteins, such as stimulated growth factor receptors, lysosomal enzymes and lipids. In Xenopus tropicalis (Western clawed frog), this protein is Charged multivesicular body protein 4b (chmp4b).